We begin with the raw amino-acid sequence, 1034 residues long: Receptor-type guanylate cyclase gcy-25 (1034 aa).

An N-terminal signal peptide occupies residues 1 to 16 (MLLLLLLLKISTFVDS). Over 17–409 (FQIGHLEFEN…YDNNLCSDFH (393 aa)) the chain is Extracellular. Residues Asn28, Asn224, Asn301, Asn308, and Asn373 are each glycosylated (N-linked (GlcNAc...) asparagine). The chain crosses the membrane as a helical span at residues 410 to 430 (VFMIAAIVFSILLIPMAIAFY). Over 431–1034 (LQRKEHLIQQ…DNSKKMFLNV (604 aa)) the chain is Cytoplasmic. One can recognise a Protein kinase domain in the interval 464 to 749 (RVSTISTARA…KITDAVNREF (286 aa)). ATP-binding positions include 470 to 478 (TARASYSSI) and Lys497. Residues 758–785 (IDQMIEMIDEYSANLEQIVAERTRELEQ) are a coiled coil. The Guanylate cyclase domain maps to 821–951 (TLLVVDVCQF…DTVNMACRMA (131 aa)).

Belongs to the adenylyl cyclase class-4/guanylyl cyclase family. As to expression, expressed in AQR, PQR and URX sensory neurons.

It localises to the cell membrane. The catalysed reaction is GTP = 3',5'-cyclic GMP + diphosphate. Guanylate cyclase involved in the production of the second messenger cGMP. The protein is Receptor-type guanylate cyclase gcy-25 of Caenorhabditis elegans.